The chain runs to 92 residues: cAMP-dependent protein kinase inhibitor beta (92 aa).

The segment at 1 to 26 (MGGGTSPEAQQDSVMRTDSSEMTDVE) is disordered. Residues 7–26 (PEAQQDSVMRTDSSEMTDVE) are compositionally biased toward polar residues. At serine 56 the chain carries Phosphoserine. A compositionally biased stretch (basic and acidic residues) spans 70–82 (EDAKTKNEEKDQG). The tract at residues 70–92 (EDAKTKNEEKDQGQPKTPLNEGK) is disordered.

Belongs to the PKI family.

In terms of biological role, extremely potent competitive inhibitor of cAMP-dependent protein kinase activity, this protein interacts with the catalytic subunit of the enzyme after the cAMP-induced dissociation of its regulatory chains. The protein is cAMP-dependent protein kinase inhibitor beta (Pkib) of Mus musculus (Mouse).